Here is a 493-residue protein sequence, read N- to C-terminus: Glutamate--tRNA ligase (493 aa).

The 'HIGH' region motif lies at 10-20 (PSPTGDPHVGT). Residues 251-255 (KLSKR) carry the 'KMSKS' region motif. Lys254 provides a ligand contact to ATP.

It belongs to the class-I aminoacyl-tRNA synthetase family. Glutamate--tRNA ligase type 1 subfamily. Monomer.

It localises to the cytoplasm. It carries out the reaction tRNA(Glu) + L-glutamate + ATP = L-glutamyl-tRNA(Glu) + AMP + diphosphate. Functionally, catalyzes the attachment of glutamate to tRNA(Glu) in a two-step reaction: glutamate is first activated by ATP to form Glu-AMP and then transferred to the acceptor end of tRNA(Glu). The chain is Glutamate--tRNA ligase from Pseudomonas putida (strain GB-1).